We begin with the raw amino-acid sequence, 210 residues long: Ribosomal RNA large subunit methyltransferase E (210 aa).

Residues glycine 67, tryptophan 69, aspartate 87, aspartate 103, and aspartate 128 each contribute to the S-adenosyl-L-methionine site. The Proton acceptor role is filled by lysine 168.

It belongs to the class I-like SAM-binding methyltransferase superfamily. RNA methyltransferase RlmE family.

It localises to the cytoplasm. The enzyme catalyses uridine(2552) in 23S rRNA + S-adenosyl-L-methionine = 2'-O-methyluridine(2552) in 23S rRNA + S-adenosyl-L-homocysteine + H(+). Functionally, specifically methylates the uridine in position 2552 of 23S rRNA at the 2'-O position of the ribose in the fully assembled 50S ribosomal subunit. In Psychrobacter cryohalolentis (strain ATCC BAA-1226 / DSM 17306 / VKM B-2378 / K5), this protein is Ribosomal RNA large subunit methyltransferase E.